The sequence spans 1098 residues: MFDILWNVGWSNGPPSWAEMERVLNGKPRHAGVPAFDADGDVPRSRKRGAYQPPGRERVGSSVAYAELHAHSAYSFLDGASTPEELVEEAARLGLCALALTDHDGLYGAVRFAEAAAELDVRTVFGAELSLGATARTERPDPPGPHLLVLARGPEGYRRLSRQLAAAHLAGGEKGKPRYDFDALTEAAGGHWHILTGCRKGHVRQALSQGGPAAAQRALADLVDRFTPSRVSIELTHHGHPLDDERNAALAGLAPRFGVGIVATTGAHFADPSRGRLAMAMAAIRARRSLDSAAGWLAPLGGAHLRSGEEMARLFAWCPEAVTAAAELGERCAFGLQLIAPRLPPFDVPDGHTEDSWLRSLVMAGARERYGPPKSAPRAYSQIEHELKVIAQLRFPGYFLVVHDITRFCRDNDILCQGRGSAANSAVCYALGVTAVDPVANELLFERFLSPARDGPPDIDIDIESDQREKVIQYVYHKYGRDYAAQVANVITYRGRSAVRDMARALGFSPGQQDAWSKQVSHWTGQADDVDGIPEQVIDLATQIRNLPRHLGIHSGGMVICDRPIADVCPVEWARMANRSVLQWDKDDCAAIGLVKFDLLGLGMLSALHYAKDLVAEHKGIEVDLARLDLSEPAVYEMLARADSVGVFQVESRAQMATLPRLKPRVFYDLVVEVALIRPGPIQGGSVHPYIRRRNGVDPVIYEHPSMAPALRKTLGVPLFQEQLMQLAVDCAGFSAAEADQLRRAMGSKRSTERMRRLRGRFYDGMRALHGAPDEVIDRIYEKLEAFANFGFPESHALSFASLVFYSAWFKLHHPAAFCAALLRAQPMGFYSPQSLVADARRHGVAVHGPCVNASLAHATCENAGTEVRLGLGAVRYLGAELAEKLVAERTANGPFTSLPDLTSRVQLSVPQVEALATAGALGCFGMSRREALWAAGAAATGRPDRLPGVGSSSHIPALPGMSELELAAADVWATGVSPDSYPTQFLRADLDAMGVLPAERLGSVSDGDRVLIAGAVTHRQRPATAQGVTFINLEDETGMVNVLCTPGVWARHRKLAHTAPALLIRGQVQNASGAITVVAERMGRLTLAVGARSRDFR.

Residues 34-57 are disordered; that stretch reads PAFDADGDVPRSRKRGAYQPPGRE.

The protein belongs to the DNA polymerase type-C family. DnaE2 subfamily.

The protein resides in the cytoplasm. The catalysed reaction is DNA(n) + a 2'-deoxyribonucleoside 5'-triphosphate = DNA(n+1) + diphosphate. Its function is as follows. DNA polymerase involved in damage-induced mutagenesis and translesion synthesis (TLS). It is not the major replicative DNA polymerase. In Mycobacterium tuberculosis (strain CDC 1551 / Oshkosh), this protein is Error-prone DNA polymerase (dnaE2).